Consider the following 579-residue polypeptide: Putative diflavin flavoprotein A 2 (579 aa).

Residues 50–243 form a zinc metallo-hydrolase region; the sequence is QNGTTYNSYL…GKIKIIANGH (194 aa). 6 residues coordinate Fe cation: His-99, Glu-101, Asp-103, His-166, Asp-185, and His-243. Residues 272-460 form the Flavodoxin-like domain; it reads VGLFYVADYG…MLASWVSQAS (189 aa). A flavodoxin-reductase-like region spans residues 461–579; sequence LQPLGFTIAV…VRHRKVGNYY (119 aa).

This sequence in the N-terminal section; belongs to the zinc metallo-hydrolase group 3 family. In the C-terminal section; belongs to the flavodoxin reductase family. Fe cation serves as cofactor.

Mediates electron transfer from NADH to oxygen, reducing it to water. This modular protein has 3 redox cofactors, in other organisms the same activity requires 2 or 3 proteins. The sequence is that of Putative diflavin flavoprotein A 2 (dfa2) from Nostoc sp. (strain PCC 7120 / SAG 25.82 / UTEX 2576).